The chain runs to 908 residues: DNA (cytosine-5)-methyltransferase 3A (908 aa).

Over residues 1–13 (MPSSGPGDTSISS) the composition is skewed to polar residues. 2 disordered regions span residues 1 to 183 (MPSS…PMPR) and 226 to 281 (SQAS…PEYE). The span at 14–37 (LEREDDRKEGEEQEENRGKEERQE) shows a compositional bias: basic and acidic residues. A compositionally biased stretch (basic residues) spans 44–54 (KVGRPGRKRKH). Positions 69-80 (TTKSQPTAQDSG) are enriched in polar residues. Phosphoserine is present on serine 102. Residues 110–124 (GAPAEGEGTETPPEA) are compositionally biased toward low complexity. A Phosphothreonine modification is found at threonine 120. A Glycyl lysine isopeptide (Lys-Gly) (interchain with G-Cter in SUMO2) cross-link involves residue lysine 158. Arginine 167 carries the omega-N-methylarginine modification. The interaction with DNMT1 and DNMT3B stretch occupies residues 195 to 399 (SKRKRDEWLA…DTGKAVEVQN (205 aa)). Residues serine 239 and serine 251 each carry the phosphoserine modification. Residues 242–256 (AVQQPTDPASPTVAT) are compositionally biased toward polar residues. A Phosphothreonine modification is found at threonine 257. The PWWP domain maps to 257–315 (TPEPVGADAGDKNATKAADDEPEYEDGRGFGIGELVWGKLRGFSWWPGRIVSWWMTGRS). Over residues 265–275 (AGDKNATKAAD) the composition is skewed to basic and acidic residues. Phosphoserine occurs at positions 386 and 389. A disordered region spans residues 443–462 (AYAPPPPAKKPRKSTTEKPK). In terms of domain architecture, ADD spans 478-610 (EVRQKCRNIE…LQMFFANNHD (133 aa)). The segment at 489 to 519 (ICISCGSLNVTLEHPLFIGGMCQNCKNCFLE) adopts a GATA-type; atypical zinc-finger fold. The interaction with the PRC2/EED-EZH2 complex stretch occupies residues 490 to 582 (CISCGSLNVT…KEDPWNCYMC (93 aa)). Residues 530–586 (QSYCTICCGGREVLMCGNNNCCRCFCVECVDLLVGPGAAQAAIKEDPWNCYMCGHKG) form a PHD-type; atypical zinc finger. Positions 630–908 (IRVLSLFDGI…APLKEYFACV (279 aa)) constitute an SAM-dependent MTase C5-type domain. S-adenosyl-L-methionine contacts are provided by residues 637–641 (DGIAT), glutamate 660, and 682–684 (DVR). Cysteine 706 is a catalytic residue. Cysteine 706 carries the S-methylcysteine; by autocatalysis modification. 887–889 (RSW) contacts S-adenosyl-L-methionine.

Belongs to the class I-like SAM-binding methyltransferase superfamily. C5-methyltransferase family. In terms of assembly, heterotetramer composed of 1 DNMT3A homodimer and 2 DNMT3L subunits (DNMT3L-DNMT3A-DNMT3A-DNMT3L). Interacts with DNMT1 and DNMT3B. Interacts with MPHOSPH8. Interacts with histone H3 that is not methylated at 'Lys-4' (H3K4). Binds the ZBTB18 transcriptional repressor. Interacts with SETDB1. Associates with HDAC1 through its ADD domain. Interacts with UHRF1. Interacts with the PRC2/EED-EZH2 complex. Interacts with UBC9, PIAS1 and PIAS2. Interacts with SPOCD1. Interacts with ZNF263; recruited to the SIX3 promoter along with other proteins involved in chromatin modification and transcriptional corepression where it contributes to transcriptional repression. In terms of processing, sumoylated; sumoylation disrupts the ability to interact with histone deacetylases (HDAC1 and HDAC2) and repress transcription. Post-translationally, auto-methylated at Cys-706: auto-methylation takes place in absence of DNA substrate and inactivates the DNA methyltransferase activity. Inactivation by auto-methylation may be used to inactivate unused DNA methyltransferases in the cell.

It is found in the nucleus. It localises to the chromosome. Its subcellular location is the cytoplasm. It catalyses the reaction a 2'-deoxycytidine in DNA + S-adenosyl-L-methionine = a 5-methyl-2'-deoxycytidine in DNA + S-adenosyl-L-homocysteine + H(+). It carries out the reaction L-cysteinyl-[protein] + S-adenosyl-L-methionine = S-methyl-L-cysteinyl-[protein] + S-adenosyl-L-homocysteine + H(+). Activated by binding to the regulatory factor DNMT3L. Auto-methylation at Cys-706 in absence of DNA inactivates the DNA methyltransferase activity. Its function is as follows. Required for genome-wide de novo methylation and is essential for the establishment of DNA methylation patterns during development. DNA methylation is coordinated with methylation of histones. It modifies DNA in a non-processive manner and also methylates non-CpG sites. May preferentially methylate DNA linker between 2 nucleosomal cores and is inhibited by histone H1. Plays a role in paternal and maternal imprinting. Required for methylation of most imprinted loci in germ cells. Acts as a transcriptional corepressor for ZBTB18. Recruited to trimethylated 'Lys-36' of histone H3 (H3K36me3) sites. Can actively repress transcription through the recruitment of HDAC activity. Also has weak auto-methylation activity on Cys-706 in absence of DNA. The chain is DNA (cytosine-5)-methyltransferase 3A (Dnmt3a) from Rattus norvegicus (Rat).